The sequence spans 382 residues: MNEVYVFTSESVSEGHPDKIADQISDAILDAILAQDPKARVACEVLVKTGMVLVGGEITTKAWVDVEEITRHVIKDIGYNSSQMGFDWESCAVLSAIGKQSPDIAQGVDNQQTKILGAGDQGLMFGYASRETDVFMPAPIAYAHRLMEKLAKARKSGQLPWLRPDAKCQLTLKYEQGMPVEVDTVVFSTQHSPDIEHKDLVEAIREEIIKSVLPAEWLNDKTRYFINPTGRFVIGGPLGDCGLTGRKIIVDTYGGMARHGGGCFSGKDPSKVDRSAAYAARHVAKNIVAAGLADKCELQISYAIGVAEPTSIFVDTFGTGRLKNSEIIDLIHTHFDLTPQGIIDQHDLLRPIYRQTATYGHYGRENFPWERLDKVAELSKAL.

Position 16 (His16) interacts with ATP. Asp18 is a Mg(2+) binding site. Glu44 provides a ligand contact to K(+). L-methionine-binding residues include Glu57 and Gln100. Residues 100-110 (QSPDIAQGVDN) form a flexible loop region. ATP is bound by residues 165-167 (DAK), 231-232 (RF), Asp240, 246-247 (RK), and Lys267. Asp240 lines the L-methionine pocket. Lys271 contacts L-methionine.

Belongs to the AdoMet synthase family. Homotetramer; dimer of dimers. The cofactor is Mg(2+). K(+) serves as cofactor.

Its subcellular location is the cytoplasm. It catalyses the reaction L-methionine + ATP + H2O = S-adenosyl-L-methionine + phosphate + diphosphate. Its pathway is amino-acid biosynthesis; S-adenosyl-L-methionine biosynthesis; S-adenosyl-L-methionine from L-methionine: step 1/1. Catalyzes the formation of S-adenosylmethionine (AdoMet) from methionine and ATP. The overall synthetic reaction is composed of two sequential steps, AdoMet formation and the subsequent tripolyphosphate hydrolysis which occurs prior to release of AdoMet from the enzyme. The polypeptide is S-adenosylmethionine synthase (Legionella pneumophila (strain Paris)).